Here is a 321-residue protein sequence, read N- to C-terminus: Tetraacyldisaccharide 4'-kinase (321 aa).

54–61 (SVGGTGKT) provides a ligand contact to ATP.

It belongs to the LpxK family.

The catalysed reaction is a lipid A disaccharide + ATP = a lipid IVA + ADP + H(+). It participates in glycolipid biosynthesis; lipid IV(A) biosynthesis; lipid IV(A) from (3R)-3-hydroxytetradecanoyl-[acyl-carrier-protein] and UDP-N-acetyl-alpha-D-glucosamine: step 6/6. Its function is as follows. Transfers the gamma-phosphate of ATP to the 4'-position of a tetraacyldisaccharide 1-phosphate intermediate (termed DS-1-P) to form tetraacyldisaccharide 1,4'-bis-phosphate (lipid IVA). This chain is Tetraacyldisaccharide 4'-kinase, found in Rickettsia africae (strain ESF-5).